Here is a 169-residue protein sequence, read N- to C-terminus: Der GTPase-activating protein YihI (169 aa).

2 disordered regions span residues 1–98 (MKPS…PQAE) and 144–169 (GLSY…LRGN). A compositionally biased stretch (basic residues) spans 10–19 (SKGHAKARRK). The span at 20-30 (TREELDQEARD) shows a compositional bias: basic and acidic residues. Residues 31 to 40 (RKRLKKRRGH) show a composition bias toward basic residues. Positions 49-58 (GNTTSGSKGQ) are enriched in polar residues. Acidic residues predominate over residues 147–159 (YDDDEEEEEDEKQ). Over residues 160–169 (EDMMRLLRGN) the composition is skewed to basic and acidic residues.

Belongs to the YihI family. Interacts with Der.

A GTPase-activating protein (GAP) that modifies Der/EngA GTPase function. May play a role in ribosome biogenesis. This is Der GTPase-activating protein YihI from Escherichia coli O6:K15:H31 (strain 536 / UPEC).